Reading from the N-terminus, the 473-residue chain is Argininosuccinate lyase (473 aa).

Belongs to the lyase 1 family. Argininosuccinate lyase subfamily.

The protein resides in the cytoplasm. The enzyme catalyses 2-(N(omega)-L-arginino)succinate = fumarate + L-arginine. It participates in amino-acid biosynthesis; L-arginine biosynthesis; L-arginine from L-ornithine and carbamoyl phosphate: step 3/3. The sequence is that of Argininosuccinate lyase from Mycobacteroides abscessus (strain ATCC 19977 / DSM 44196 / CCUG 20993 / CIP 104536 / JCM 13569 / NCTC 13031 / TMC 1543 / L948) (Mycobacterium abscessus).